Reading from the N-terminus, the 213-residue chain is N-(5'-phosphoribosyl)anthranilate isomerase (213 aa).

The protein belongs to the TrpF family.

The enzyme catalyses N-(5-phospho-beta-D-ribosyl)anthranilate = 1-(2-carboxyphenylamino)-1-deoxy-D-ribulose 5-phosphate. The protein operates within amino-acid biosynthesis; L-tryptophan biosynthesis; L-tryptophan from chorismate: step 3/5. In Methanocella arvoryzae (strain DSM 22066 / NBRC 105507 / MRE50), this protein is N-(5'-phosphoribosyl)anthranilate isomerase.